The sequence spans 860 residues: GAS2-like protein 2 (860 aa).

Residues 1-12 (MSQHVGHGRRPR) are compositionally biased toward basic residues. The tract at residues 1–22 (MSQHVGHGRRPRTPGPPVRSIR) is disordered. The 128-residue stretch at 32–159 (EAMKEDLAEW…CLLELGRRAW (128 aa)) folds into the Calponin-homology (CH) domain. The 73-residue stretch at 201–273 (CHFHNLDQMV…HYLDKHDPCR (73 aa)) folds into the GAR domain. Disordered regions lie at residues 281–459 (PGSF…SLAS), 473–574 (QLSE…RHTS), 697–743 (TTVR…KGKR), 758–781 (KLRPRIRPRRDHRPEKRPSRIPKP), and 801–860 (ATLG…ESWV). Residues 301-316 (GPSQPQPTMTISRSQS) show a composition bias toward polar residues. Positions 347–364 (PPVRARTLREDPLPRSQE) are enriched in basic and acidic residues. Composition is skewed to polar residues over residues 365–393 (KPTPSQRMSSPGPQFSSTCRGPDLQSTLS) and 473–485 (QLSEPMTVHSSSP). The interaction with ADORA2A and GNAS stretch occupies residues 431–860 (QRLQIPEATS…PLSPEEESWV (430 aa)). Over residues 530-549 (NLDRSTHGHHSVEASGDHQT) the composition is skewed to basic and acidic residues. The segment covering 724 to 733 (RSCSDPSSDK) has biased composition (polar residues). The span at 758 to 768 (KLRPRIRPRRD) shows a compositional bias: basic residues. Polar residues predominate over residues 828 to 840 (SNISLESSIQPAE).

The protein belongs to the GAS2 family. As to quaternary structure, interacts with ADORA2A (via its cytoplasmic C-terminal domain). Interacts with GNAS, GNAL, GNAQ, and GNA13. Interacts with MAPRE1. As to expression, expressed in tracheal epithelial cells (at protein level).

Its subcellular location is the cytoplasm. The protein resides in the cytoskeleton. It localises to the cell membrane. It is found in the stress fiber. The protein localises to the cilium basal body. Functionally, involved in the cross-linking of microtubules and microfilaments. Regulates microtubule dynamics and stability by interacting with microtubule plus-end tracking proteins, such as MAPRE1, to regulate microtubule growth along actin stress fibers. Enhances ADORA2-mediated adenylyl cyclase activation by acting as a scaffold to recruit trimeric G-protein complexes to ADORA2A. Regulates ciliary orientation and performance in cells located in the airway. This is GAS2-like protein 2 (Gas2l2) from Mus musculus (Mouse).